Reading from the N-terminus, the 409-residue chain is MDKVIFMVDMESFFASVERANHPELSGRPLLVSGDPERRSGVILAACPVAKARGVTNGERLWEAQQKCPEAVVVRPHMQQYVTVSVQITEILERFTDLIEPFSIDEQFMDVTHSQRLFGAPREIAQKVQQAIWHETGVRARIGMGESKVLAKMACDNFAKKMPSGVFHLTKERMERLLWPLPIECLYGVGRQMTKYFRNQGIRTIGQLANTSLERIKGKWGVNGHVLWLTAHGIDPSPVTPHSHDKQKGIGHGMTLPHDYVKAEDIHVVLLELCEEVCKRARRAHLMGRTVAIGVSGANMETPTGFHRQMKLTNHTNITMEVYEGAATLFERFWDGKPIRRLHVNLSNLTSDEAWQLSFFGNRDRAHQLGYTMDTIKEKFGDTAIRRAVSFLSASQAEERAKKIGGHYK.

The UmuC domain maps to 5-190 (IFMVDMESFF…LPIECLYGVG (186 aa)). Residues D9 and D105 each coordinate Mg(2+). The active site involves E106.

The protein belongs to the DNA polymerase type-Y family. Monomer. It depends on Mg(2+) as a cofactor.

It localises to the cytoplasm. It catalyses the reaction DNA(n) + a 2'-deoxyribonucleoside 5'-triphosphate = DNA(n+1) + diphosphate. Poorly processive, error-prone DNA polymerase involved in untargeted mutagenesis. Copies undamaged DNA at stalled replication forks, which arise in vivo from mismatched or misaligned primer ends. These misaligned primers can be extended by PolIV. Exhibits no 3'-5' exonuclease (proofreading) activity. May be involved in translesional synthesis, in conjunction with the beta clamp from PolIII. This chain is DNA polymerase IV 2 (dinB2), found in Halalkalibacterium halodurans (strain ATCC BAA-125 / DSM 18197 / FERM 7344 / JCM 9153 / C-125) (Bacillus halodurans).